We begin with the raw amino-acid sequence, 999 residues long: Hypoxia up-regulated protein 1 (999 aa).

The signal sequence occupies residues 1–32 (MAATVRRQRPRRLLCWALVAVLLADLLALSDT). N-linked (GlcNAc...) asparagine glycosylation is found at Asn-155, Asn-222, and Asn-515. Ser-567 carries the post-translational modification Phosphoserine. The tract at residues 567 to 694 (SPEEESTLTK…KKPKPARKQK (128 aa)) is disordered. Residues 574–583 (LTKLGNTISS) show a composition bias toward polar residues. Asn-596 is a glycosylation site (N-linked (GlcNAc...) asparagine). Basic and acidic residues-rich tracts occupy residues 611-626 (GSKD…KEEA) and 641-668 (PKGD…KPNE). Residues 669 to 680 (KGQAGPEGAAPA) show a composition bias toward low complexity. N-linked (GlcNAc...) asparagine glycosylation is found at Asn-830, Asn-862, and Asn-869. The residue at position 883 (Lys-883) is an N6-acetyllysine. The disordered stretch occupies residues 909–999 (AKFTKPRPRP…QKRPSKNDEL (91 aa)). Residues Asn-922 and Asn-931 are each glycosylated (N-linked (GlcNAc...) asparagine). Basic and acidic residues predominate over residues 949–962 (EEAKPILEPDKEET). Positions 996 to 999 (NDEL) match the Prevents secretion from ER motif.

This sequence belongs to the heat shock protein 70 family. In terms of assembly, part of a large chaperone multiprotein complex comprising DNAJB11, HSP90B1, HSPA5, HYOU, PDIA2, PDIA4, PDIA6, PPIB, SDF2L1, UGGT1 and very small amounts of ERP29, but not, or at very low levels, CALR nor CANX.

It is found in the endoplasmic reticulum lumen. In terms of biological role, has a pivotal role in cytoprotective cellular mechanisms triggered by oxygen deprivation. Promotes HSPA5/BiP-mediated ATP nucleotide exchange and thereby activates the unfolded protein response (UPR) pathway in the presence of endoplasmic reticulum stress. May play a role as a molecular chaperone and participate in protein folding. In Mus musculus (Mouse), this protein is Hypoxia up-regulated protein 1 (Hyou1).